Reading from the N-terminus, the 626-residue chain is Methanol dehydrogenase [cytochrome c] subunit 1 (626 aa).

A signal peptide spans 1-27 (MSRFVTSVSALAMLALAPAALSSGAYA). The cysteines at positions 130 and 131 are disulfide-linked. Positions 204 and 288 each coordinate Ca(2+). D330 serves as the catalytic Proton acceptor. Cysteines 413 and 442 form a disulfide.

Belongs to the bacterial PQQ dehydrogenase family. In terms of assembly, heterotetramer composed of 2 alpha and 2 beta subunits. Pyrroloquinoline quinone serves as cofactor. The cofactor is Ca(2+).

Its subcellular location is the cell inner membrane. The catalysed reaction is 2 Fe(III)-[cytochrome cL] + a primary alcohol = 2 Fe(II)-[cytochrome cL] + an aldehyde + 2 H(+). Its function is as follows. Catalyzes the oxidation of primary alcohols including methanol. The polypeptide is Methanol dehydrogenase [cytochrome c] subunit 1 (moxF) (Methylorubrum extorquens (strain ATCC 14718 / DSM 1338 / JCM 2805 / NCIMB 9133 / AM1) (Methylobacterium extorquens)).